The chain runs to 167 residues: Urease accessory protein UreE (167 aa).

It belongs to the UreE family.

The protein localises to the cytoplasm. Its function is as follows. Involved in urease metallocenter assembly. Binds nickel. Probably functions as a nickel donor during metallocenter assembly. The protein is Urease accessory protein UreE of Pseudomonas aeruginosa (strain LESB58).